The chain runs to 414 residues: 3-phosphoshikimate 1-carboxyvinyltransferase (414 aa).

Residues Lys-20, Ser-21, and Arg-25 each contribute to the 3-phosphoshikimate site. Position 20 (Lys-20) interacts with phosphoenolpyruvate. Positions 85 and 113 each coordinate phosphoenolpyruvate. Residues Ser-154, Ser-155, Gln-156, Ser-181, Asp-296, and Lys-323 each contribute to the 3-phosphoshikimate site. Gln-156 contacts phosphoenolpyruvate. Asp-296 serves as the catalytic Proton acceptor. Phosphoenolpyruvate-binding residues include Arg-327, Arg-371, and Lys-395.

Belongs to the EPSP synthase family. As to quaternary structure, monomer.

The protein localises to the cytoplasm. The catalysed reaction is 3-phosphoshikimate + phosphoenolpyruvate = 5-O-(1-carboxyvinyl)-3-phosphoshikimate + phosphate. It functions in the pathway metabolic intermediate biosynthesis; chorismate biosynthesis. Its function is as follows. Catalyzes the transfer of the enolpyruvyl moiety of phosphoenolpyruvate (PEP) to the 5-hydroxyl of shikimate-3-phosphate (S3P) to produce enolpyruvyl shikimate-3-phosphate and inorganic phosphate. This chain is 3-phosphoshikimate 1-carboxyvinyltransferase, found in Saccharolobus islandicus (strain M.14.25 / Kamchatka #1) (Sulfolobus islandicus).